A 265-amino-acid chain; its full sequence is Speedy protein E8 (265 aa).

The disordered stretch occupies residues 1–80 (MGQILGKIMM…EPEKELAPEP (80 aa)). Acidic residues predominate over residues 66–80 (DESDDEPEKELAPEP).

This sequence belongs to the Speedy/Ringo family.

The protein is Speedy protein E8 of Homo sapiens (Human).